A 225-amino-acid chain; its full sequence is Two-component response regulator ARR8 (225 aa).

The Response regulatory domain occupies 10–145 (HVLAVDDSLF…DLTKLKPHMM (136 aa)). Asp-78 is modified (4-aspartylphosphate).

The protein belongs to the ARR family. Type-A subfamily. Post-translationally, two-component system major event consists of a His-to-Asp phosphorelay between a sensor histidine kinase (HK) and a response regulator (RR). In plants, the His-to-Asp phosphorelay involves an additional intermediate named Histidine-containing phosphotransfer protein (HPt). This multistep phosphorelay consists of a His-Asp-His-Asp sequential transfer of a phosphate group between first a His and an Asp of the HK protein, followed by the transfer to a conserved His of the HPt protein and finally the transfer to an Asp in the receiver domain of the RR protein. Predominantly expressed in roots.

The protein localises to the nucleus. Its function is as follows. Functions as a response regulator involved in His-to-Asp phosphorelay signal transduction system. Phosphorylation of the Asp residue in the receiver domain activates the ability of the protein to promote the transcription of target genes. Type-A response regulators seem to act as negative regulators of the cytokinin signaling. The sequence is that of Two-component response regulator ARR8 (ARR8) from Arabidopsis thaliana (Mouse-ear cress).